Reading from the N-terminus, the 847-residue chain is Aryl hydrocarbon receptor (847 aa).

Residues 1–39 (MNGGGANITYASRKRRKPVQKTVKPIPAEGIKSNPSKRH) are disordered. 2 consecutive short sequence motifs (nuclear localization signal) follow at residues 13 to 16 (RKRR) and 37 to 42 (KRHRDR). The bHLH domain occupies 27 to 80 (PAEGIKSNPSKRHRDRLNTELDRLASLLPFPQDVINKLDKLSVLRLSVSYLRAK). The segment at 38–66 (RHRDRLNTELDRLASLLPFPQDVINKLDK) is DNA-binding. 3 required for maintaining the overall integrity of the AHR:ARNT heterodimer and its transcriptional activity regions span residues 50 to 82 (LASL…AKSF), 117 to 125 (LLQALNGFV), and 264 to 266 (FAI). The Nuclear export signal motif lies at 64–72 (LDKLSVLRL). The PAS 1 domain occupies 120–173 (ALNGFVLVVTVDALVFYASSTIQDYLGFQQSDVIHQSVYELIHTEDRAEFQRQL). The region spanning 281-336 (KNFIFRTKHKLDFTPTGCDAKGQIVLGYTEAELCMRGSGYQFIHAADMLYCAESHI) is the PAS 2 domain. Residues 346–384 (LAVFRLLTKDNRWAWVQSNARFIYKNGRPDFIIATQRPL) enclose the PAC domain. 2 disordered regions span residues 430-452 (KSGT…VHPS) and 825-847 (HLPP…GRLL). The segment covering 440–452 (TKPTPSKDSVHPS) has biased composition (polar residues).

In terms of assembly, homodimer. Heterodimer; efficient DNA binding requires dimerization with another bHLH protein. Binds MYBBP1A. Interacts with coactivators including SRC-1, RIP140 and NOCA7, and with the corepressor SMRT. Interacts with NEDD8 and IVNS1ABP. Interacts with BMAL1. Interacts with HSP90AB1. Interacts with ARNT; the heterodimer ARNT:AHR binds to core DNA sequence 5'-TGCGTG-3' within the dioxin response element (DRE) of target gene promoters and activates their transcription. Interacts with TIPARP; leading to mono-ADP-ribosylation of AHR and subsequent inhibition of AHR. Post-translationally, mono-ADP-ribosylated, leading to inhibit transcription activator activity of AHR.

It localises to the cytoplasm. The protein localises to the nucleus. Functionally, ligand-activated transcription factor that enables cells to adapt to changing conditions by sensing compounds from the environment, diet, microbiome and cellular metabolism, and which plays important roles in development, immunity and cancer. Upon ligand binding, translocates into the nucleus, where it heterodimerizes with ARNT and induces transcription by binding to xenobiotic response elements (XRE). Regulates a variety of biological processes, including angiogenesis, hematopoiesis, drug and lipid metabolism, cell motility and immune modulation. Xenobiotics can act as ligands: upon xenobiotic-binding, activates the expression of multiple phase I and II xenobiotic chemical metabolizing enzyme genes (such as the CYP1A1 gene). Mediates biochemical and toxic effects of halogenated aromatic hydrocarbons. Next to xenobiotics, natural ligands derived from plants, microbiota, and endogenous metabolism are potent AHR agonists. Tryptophan (Trp) derivatives constitute an important class of endogenous AHR ligands. Acts as a negative regulator of anti-tumor immunity: indoles and kynurenic acid generated by Trp catabolism act as ligand and activate AHR, thereby promoting AHR-driven cancer cell motility and suppressing adaptive immunity. Regulates the circadian clock by inhibiting the basal and circadian expression of the core circadian component PER1. Inhibits PER1 by repressing the CLOCK-BMAL1 heterodimer mediated transcriptional activation of PER1. The heterodimer ARNT:AHR binds to core DNA sequence 5'-TGCGTG-3' within the dioxin response element (DRE) of target gene promoters and activates their transcription. This Oryctolagus cuniculus (Rabbit) protein is Aryl hydrocarbon receptor (AHR).